The chain runs to 641 residues: MELKGVQPSNGSANGNGTTNAASTEKTDAEKHTPERTNWGNGLEFLMSCISVSVGLGNVWRFPFTAYENGGGAFLIPYIIVLFLIGKPMYYLEMIMGQFTSQGTVKIWSVVPGFVGVGYGQAFGTICIISYYSSLLALTLYYLFVSFQSELPWSYCRDEWTNCVNSRPQEYVDNLLSGVSLANESARNFSAIGSVANEETEKLQSSSELYFLNVVIKEKLDISDGVGDPDWKLTLALLAAWVVIFLVIMRGVKSSGKAAYFLALFPYVVLFVLLIRAVTLEGARDGILFFLEPQWGELLNPTVWKEAVVQCFFSLAVGSGPIIMFASYNRFDHGIYRDAMIVTTLDTLTSLLGGITIFAILGNLAHNLQIENIRDVVRSGTGLAFISYPDAISKFKAVPQLFSVLFFFMLFVLGIGSIVALQSTIVTIICDQFKGLKYWKVALITSACGFLMGLVYVTPGGQWILTLVDFYGGTYVVFILAIFELAGIVWVYGLQNFCDDIEFMCNRRVSLYWRMCWSFFTPVMMIIIFIYSMVTIEPIKYSELYFPEAANIAGWLLFAIGAAQFPLWGLWYVSRHPQGTYWKSLKASMKPSERWGPANPETRREWVIFKNHKAAQRATQKDVSKLGFFWRKLTNFCGSNK.

The interval 1–36 (MELKGVQPSNGSANGNGTTNAASTEKTDAEKHTPER) is disordered. Residues 1–38 (MELKGVQPSNGSANGNGTTNAASTEKTDAEKHTPERTN) lie on the Cytoplasmic side of the membrane. A compositionally biased stretch (low complexity) spans 9 to 24 (SNGSANGNGTTNAAST). Residues 25–35 (EKTDAEKHTPE) are compositionally biased toward basic and acidic residues. A run of 3 helical transmembrane segments spans residues 39 to 59 (WGNG…LGNV), 72 to 92 (GAFL…MYYL), and 109 to 129 (SVVP…ICII). N-linked (GlcNAc...) asparagine glycans are attached at residues N183 and N188. 9 consecutive transmembrane segments (helical) span residues 229-249 (PDWK…LVIM), 258-278 (AAYF…IRAV), 307-327 (AVVQ…MFAS), 341-361 (IVTT…FAIL), 401-421 (LFSV…IVAL), 441-461 (VALI…TPGG), 474-494 (TYVV…VYGL), 516-536 (CWSF…MVTI), and 552-572 (IAGW…GLWY).

The protein belongs to the sodium:neurotransmitter symporter (SNF) (TC 2.A.22) family.

It localises to the membrane. Functionally, unusual broad substrate spectrum amino acid:sodium cotransporter that promotes absorption of the D isomers of essential amino acids. Neutral amino acids are the preferred substrates, especially methionine and phenylalanine. The chain is Sodium-dependent nutrient amino acid transporter 1 from Drosophila erecta (Fruit fly).